Consider the following 148-residue polypeptide: MDVILLDKIGKLGNLGDQVAVKAGYGRNYLVPYGLAVPATKENVAAFEAQRAELEAQAAERKAEAEARAAQLSEIELSLVAKAGDEGKLFGSIGPRDLADALTQAGLDVVKSEVRMPEGPIRKTGEYDITLQLHAEVTSSVRIVVVAE.

It belongs to the bacterial ribosomal protein bL9 family.

Functionally, binds to the 23S rRNA. This chain is Large ribosomal subunit protein bL9, found in Chromohalobacter salexigens (strain ATCC BAA-138 / DSM 3043 / CIP 106854 / NCIMB 13768 / 1H11).